We begin with the raw amino-acid sequence, 288 residues long: Alpha/beta hydrolase domain-containing protein 17B (288 aa).

Residues serine 170, aspartate 235, and histidine 264 each act as charge relay system in the active site.

This sequence belongs to the AB hydrolase superfamily. ABHD17 family. Post-translationally, palmitoylated on cysteine residues located in a cysteine cluster at the N-terminus which promotes membrane localization.

The protein resides in the cell membrane. It is found in the recycling endosome membrane. The protein localises to the cell projection. Its subcellular location is the dendritic spine. It localises to the postsynaptic density membrane. It catalyses the reaction S-hexadecanoyl-L-cysteinyl-[protein] + H2O = L-cysteinyl-[protein] + hexadecanoate + H(+). Its function is as follows. Hydrolyzes fatty acids from S-acylated cysteine residues in proteins. Has depalmitoylating activity towards nras. This is Alpha/beta hydrolase domain-containing protein 17B from Xenopus laevis (African clawed frog).